The chain runs to 600 residues: Copine-A (600 aa).

C2 domains follow at residues 1–111 (MNLK…TVCL) and 116–246 (KSGK…NVIN). The Ca(2+) site is built by Asp-23, Asp-29, Asp-82, Asp-84, Asp-89, Asp-151, Asp-158, Asp-215, Asp-217, and Asp-223. A VWFA domain is found at 286–503 (NLIVGIDCTA…ELAAEVLREI (218 aa)). Residues 535–549 (YDNPTTTTTATSPST) are compositionally biased toward low complexity. Residues 535–583 (YDNPTTTTTATSPSTGIDLNKGSNVGLNLTKTESSPSPSGGAGIDLNKG) are disordered. Polar residues predominate over residues 555 to 572 (KGSNVGLNLTKTESSPSP).

This sequence belongs to the copine family. Requires Ca(2+) as cofactor.

Its subcellular location is the cytoplasm. The protein resides in the membrane. Required for cytokinesis, contractile vacuole function and development. This is Copine-A (cpnA) from Dictyostelium discoideum (Social amoeba).